Reading from the N-terminus, the 492-residue chain is Cysteine--tRNA ligase (492 aa).

C27 is a Zn(2+) binding site. A 'HIGH' region motif is present at residues 29–39 (VTVYDLCHLGH). 3 residues coordinate Zn(2+): C211, H236, and E240. Positions 268–272 (KMSKS) match the 'KMSKS' region motif. K271 is an ATP binding site.

Belongs to the class-I aminoacyl-tRNA synthetase family. Monomer. Zn(2+) is required as a cofactor.

It is found in the cytoplasm. It catalyses the reaction tRNA(Cys) + L-cysteine + ATP = L-cysteinyl-tRNA(Cys) + AMP + diphosphate. In Prochlorococcus marinus (strain MIT 9515), this protein is Cysteine--tRNA ligase.